A 392-amino-acid polypeptide reads, in one-letter code: Protein RecA (392 aa).

The disordered stretch occupies residues 1–21 (MALETKPAQDPATEIKHELDP). ATP is bound at residue 83-90 (GPESSGKT). The segment at 372 to 392 (DAAKDTKATAAPAAKSSRAKA) is disordered. Positions 379 to 392 (ATAAPAAKSSRAKA) are enriched in low complexity.

The protein belongs to the RecA family.

The protein localises to the cytoplasm. In terms of biological role, can catalyze the hydrolysis of ATP in the presence of single-stranded DNA, the ATP-dependent uptake of single-stranded DNA by duplex DNA, and the ATP-dependent hybridization of homologous single-stranded DNAs. It interacts with LexA causing its activation and leading to its autocatalytic cleavage. This is Protein RecA from Bifidobacterium breve.